Here is a 643-residue protein sequence, read N- to C-terminus: 1-deoxy-D-xylulose-5-phosphate synthase (643 aa).

Thiamine diphosphate-binding positions include His72 and 113–115 (GHA). Mg(2+) is bound at residue Asp144. Thiamine diphosphate-binding positions include 145–146 (GA), Asn174, Tyr287, and Glu370. Asn174 serves as a coordination point for Mg(2+).

Belongs to the transketolase family. DXPS subfamily. In terms of assembly, homodimer. Requires Mg(2+) as cofactor. It depends on thiamine diphosphate as a cofactor.

The enzyme catalyses D-glyceraldehyde 3-phosphate + pyruvate + H(+) = 1-deoxy-D-xylulose 5-phosphate + CO2. Its pathway is metabolic intermediate biosynthesis; 1-deoxy-D-xylulose 5-phosphate biosynthesis; 1-deoxy-D-xylulose 5-phosphate from D-glyceraldehyde 3-phosphate and pyruvate: step 1/1. Catalyzes the acyloin condensation reaction between C atoms 2 and 3 of pyruvate and glyceraldehyde 3-phosphate to yield 1-deoxy-D-xylulose-5-phosphate (DXP). The polypeptide is 1-deoxy-D-xylulose-5-phosphate synthase (Synechococcus sp. (strain CC9605)).